The sequence spans 575 residues: Beta-amylase (575 aa).

The first 36 residues, 1-36 (MLHSQKRIWKKIGLCLLSFILGITVFTGSFGSKAEA), serve as a signal peptide directing secretion. Substrate is bound at residue Asp-77. Positions 84 and 88 each coordinate Ca(2+). Positions 117 and 125 each coordinate substrate. A disulfide bond links Cys-119 and Cys-127. Glu-171 lines the Ca(2+) pocket. Glu-199 serves as the catalytic Proton donor. Residues Lys-315, His-320, and Thr-358 each contribute to the substrate site. Glu-395 acts as the Proton acceptor in catalysis. Substrate is bound by residues 396–397 (NA) and Arg-424.

The protein belongs to the glycosyl hydrolase 14 family. As to quaternary structure, monomer. Ca(2+) serves as cofactor.

The catalysed reaction is Hydrolysis of (1-&gt;4)-alpha-D-glucosidic linkages in polysaccharides so as to remove successive maltose units from the non-reducing ends of the chains.. The chain is Beta-amylase from Niallia circulans (Bacillus circulans).